The following is a 576-amino-acid chain: Sulfite reductase [NADPH] hemoprotein beta-component (576 aa).

[4Fe-4S] cluster is bound by residues C435, C441, C480, and C484. A siroheme-binding site is contributed by C484.

The protein belongs to the nitrite and sulfite reductase 4Fe-4S domain family. Alpha(8)-beta(8). The alpha component is a flavoprotein, the beta component is a hemoprotein. Requires siroheme as cofactor. The cofactor is [4Fe-4S] cluster.

It carries out the reaction hydrogen sulfide + 3 NADP(+) + 3 H2O = sulfite + 3 NADPH + 4 H(+). It participates in sulfur metabolism; hydrogen sulfide biosynthesis; hydrogen sulfide from sulfite (NADPH route): step 1/1. In terms of biological role, component of the sulfite reductase complex that catalyzes the 6-electron reduction of sulfite to sulfide. This is one of several activities required for the biosynthesis of L-cysteine from sulfate. This Yersinia pseudotuberculosis serotype IB (strain PB1/+) protein is Sulfite reductase [NADPH] hemoprotein beta-component.